Here is a 302-residue protein sequence, read N- to C-terminus: 4-hydroxy-tetrahydrodipicolinate synthase (302 aa).

Residue threonine 56 coordinates pyruvate. Catalysis depends on tyrosine 145, which acts as the Proton donor/acceptor. Residue lysine 173 is the Schiff-base intermediate with substrate of the active site. Residue valine 215 coordinates pyruvate.

This sequence belongs to the DapA family. As to quaternary structure, homotetramer; dimer of dimers.

The protein localises to the cytoplasm. It catalyses the reaction L-aspartate 4-semialdehyde + pyruvate = (2S,4S)-4-hydroxy-2,3,4,5-tetrahydrodipicolinate + H2O + H(+). The protein operates within amino-acid biosynthesis; L-lysine biosynthesis via DAP pathway; (S)-tetrahydrodipicolinate from L-aspartate: step 3/4. Catalyzes the condensation of (S)-aspartate-beta-semialdehyde [(S)-ASA] and pyruvate to 4-hydroxy-tetrahydrodipicolinate (HTPA). The sequence is that of 4-hydroxy-tetrahydrodipicolinate synthase from Prochlorococcus marinus subsp. pastoris (strain CCMP1986 / NIES-2087 / MED4).